The chain runs to 836 residues: Translation initiation factor IF-2 (836 aa).

The segment at M1 to Q233 is disordered. Over residues S18–H27 the composition is skewed to polar residues. Low complexity predominate over residues S50–S60. Over residues K88–R156 the composition is skewed to basic and acidic residues. Low complexity predominate over residues P167–P176. Residues S185–R206 show a composition bias toward basic and acidic residues. Residues P333–D501 enclose the tr-type G domain. The segment at G342–T349 is G1. G342–T349 lines the GTP pocket. The tract at residues G367–H371 is G2. Residues D389–G392 are G3. Residues D389–H393 and N443–D446 each bind GTP. The G4 stretch occupies residues N443–D446. Residues S479–K481 form a G5 region.

It belongs to the TRAFAC class translation factor GTPase superfamily. Classic translation factor GTPase family. IF-2 subfamily.

Its subcellular location is the cytoplasm. Its function is as follows. One of the essential components for the initiation of protein synthesis. Protects formylmethionyl-tRNA from spontaneous hydrolysis and promotes its binding to the 30S ribosomal subunits. Also involved in the hydrolysis of GTP during the formation of the 70S ribosomal complex. In Cereibacter sphaeroides (strain ATCC 17023 / DSM 158 / JCM 6121 / CCUG 31486 / LMG 2827 / NBRC 12203 / NCIMB 8253 / ATH 2.4.1.) (Rhodobacter sphaeroides), this protein is Translation initiation factor IF-2.